Reading from the N-terminus, the 503-residue chain is Cobyric acid synthase (503 aa).

A GATase cobBQ-type domain is found at 255 to 444 (DIDIAVIRYP…FHDLFHNDAF (190 aa)). The Nucleophile role is filled by Cys-337. Residue His-436 is part of the active site.

This sequence belongs to the CobB/CobQ family. CobQ subfamily.

The protein operates within cofactor biosynthesis; adenosylcobalamin biosynthesis. Its function is as follows. Catalyzes amidations at positions B, D, E, and G on adenosylcobyrinic A,C-diamide. NH(2) groups are provided by glutamine, and one molecule of ATP is hydrogenolyzed for each amidation. The chain is Cobyric acid synthase from Geobacillus sp. (strain WCH70).